Consider the following 496-residue polypeptide: uncharacterized protein (496 aa).

Residues 118–129 (LDRPFIKPRREN) show a composition bias toward basic and acidic residues. The disordered stretch occupies residues 118–187 (LDRPFIKPRR…NPHQSNRNTS (70 aa)). Residues 151–187 (TSDSQYASPFENHSITNLPIGQKQPFNNPHQSNRNTS) are compositionally biased toward polar residues.

This is an uncharacterized protein from Acanthamoeba polyphaga mimivirus (APMV).